A 239-amino-acid polypeptide reads, in one-letter code: Ribosomal RNA small subunit methyltransferase G (239 aa).

S-adenosyl-L-methionine contacts are provided by residues Gly-105, Leu-110, Val-156 to Glu-157, and Arg-169.

The protein belongs to the methyltransferase superfamily. RNA methyltransferase RsmG family.

It is found in the cytoplasm. The enzyme catalyses guanosine(527) in 16S rRNA + S-adenosyl-L-methionine = N(7)-methylguanosine(527) in 16S rRNA + S-adenosyl-L-homocysteine. In terms of biological role, specifically methylates the N7 position of guanine in position 527 of 16S rRNA. This is Ribosomal RNA small subunit methyltransferase G from Verminephrobacter eiseniae (strain EF01-2).